The following is a 315-amino-acid chain: GTP cyclohydrolase MptA (315 aa).

This sequence belongs to the GTP cyclohydrolase IV family. As to quaternary structure, homodimer. Fe(2+) serves as cofactor.

It carries out the reaction GTP + H2O = 7,8-dihydroneopterin 2',3'-cyclic phosphate + formate + diphosphate + H(+). It participates in cofactor biosynthesis; 5,6,7,8-tetrahydromethanopterin biosynthesis. Converts GTP to 7,8-dihydro-D-neopterin 2',3'-cyclic phosphate, the first intermediate in the biosynthesis of coenzyme methanopterin. The sequence is that of GTP cyclohydrolase MptA from Methanococcus maripaludis (strain C5 / ATCC BAA-1333).